Consider the following 1288-residue polypeptide: 5-oxoprolinase (1288 aa).

The interval 1248–1270 is disordered; it reads PGGGGYGDPEDPAPPPGSPPLFP. Positions 1259 to 1270 are enriched in pro residues; the sequence is PAPPPGSPPLFP. Ser1265 carries the post-translational modification Phosphoserine.

This sequence belongs to the oxoprolinase family. Homodimer. Expressed in testis, kidney and liver.

It localises to the cytoplasm. The protein resides in the cytosol. It carries out the reaction 5-oxo-L-proline + ATP + 2 H2O = L-glutamate + ADP + phosphate + H(+). Functionally, catalyzes the cleavage of 5-oxo-L-proline to form L-glutamate coupled to the hydrolysis of ATP to ADP and inorganic phosphate. This Rattus norvegicus (Rat) protein is 5-oxoprolinase (Oplah).